Here is a 275-residue protein sequence, read N- to C-terminus: Large ribosomal subunit protein uL2 (275 aa).

Residues 221–275 are disordered; that stretch reads RGTAMNPVDHPHGGGEGRTGEGRVPVNPWGQPTKGYRTRSNKRTNSMIVQRRHKR. Over residues 229 to 241 the composition is skewed to basic and acidic residues; it reads DHPHGGGEGRTGE.

This sequence belongs to the universal ribosomal protein uL2 family. Part of the 50S ribosomal subunit. Forms a bridge to the 30S subunit in the 70S ribosome.

One of the primary rRNA binding proteins. Required for association of the 30S and 50S subunits to form the 70S ribosome, for tRNA binding and peptide bond formation. It has been suggested to have peptidyltransferase activity; this is somewhat controversial. Makes several contacts with the 16S rRNA in the 70S ribosome. The sequence is that of Large ribosomal subunit protein uL2 from Dechloromonas aromatica (strain RCB).